The following is a 675-amino-acid chain: Probable metal-nicotianamine transporter YSL16 (675 aa).

Positions 1–11 (MDRHALGGGGA) are enriched in gly residues. Positions 1–20 (MDRHALGGGGALEIEKTPEA) are disordered. Transmembrane regions (helical) follow at residues 50–70 (GMVA…KLSL), 73–93 (GLIP…LRGW), 118–138 (CAVA…LLGL), 162–182 (GIGW…LTLL), 231–251 (ISFL…CGFL), 283–303 (LVNL…WPLI), 329–349 (FICI…VIVV), 393–413 (MAYT…PVMF), 421–441 (VIIA…GTGL), 453–473 (IALF…AGLV), 507–527 (VGQV…FFLF), 567–587 (LQLC…RDFL), 605–625 (FLVG…VFLW), and 633–653 (AALL…IWTF).

This sequence belongs to the YSL (TC 2.A.67.2) family. As to expression, expressed in roots.

It is found in the membrane. Functionally, may be involved in the transport of nicotianamine-chelated metals. The polypeptide is Probable metal-nicotianamine transporter YSL16 (YSL16) (Oryza sativa subsp. japonica (Rice)).